The sequence spans 234 residues: UPF0309 protein lmo0025 (234 aa).

The 175-residue stretch at 31 to 205 folds into the SIS domain; sequence VADSIMNDGI…ELMLEKGYTP (175 aa).

The protein belongs to the UPF0309 family.

The sequence is that of UPF0309 protein lmo0025 from Listeria monocytogenes serovar 1/2a (strain ATCC BAA-679 / EGD-e).